Here is a 215-residue protein sequence, read N- to C-terminus: Variable small protein 6 (215 aa).

Residues 1–18 (MRKRISAIIMTLFMVFMS) form the signal peptide. Residue C19 is the site of N-palmitoyl cysteine attachment. A lipid anchor (S-diacylglycerol cysteine) is attached at C19.

It belongs to the variable small protein (Vsp) family.

The protein resides in the cell outer membrane. The Vlp and Vsp proteins are antigenically distinct proteins, only one vlp or vsp gene is transcriptionally active at any one time. Switching between these genes is a mechanism of host immune response evasion. This is Variable small protein 6 from Borrelia hermsii.